The sequence spans 85 residues: Cell division topological specificity factor (85 aa).

The protein belongs to the MinE family.

Functionally, prevents the cell division inhibition by proteins MinC and MinD at internal division sites while permitting inhibition at polar sites. This ensures cell division at the proper site by restricting the formation of a division septum at the midpoint of the long axis of the cell. The polypeptide is Cell division topological specificity factor (Shewanella oneidensis (strain ATCC 700550 / JCM 31522 / CIP 106686 / LMG 19005 / NCIMB 14063 / MR-1)).